The sequence spans 303 residues: Protein transport protein SEC13-2 (303 aa).

WD repeat units follow at residues 7–46 (AHEG…NSSS), 53–95 (GHEG…GKMQ), 102–143 (VHSA…IAST), 149–202 (AHKF…ETYV), 209–251 (GHKD…KKND), and 261–300 (KFEQ…KWEE).

This sequence belongs to the WD repeat SEC13 family. As to quaternary structure, the COPII coat is composed of at least 5 proteins: the SEC23/24 complex, the SEC13/31 complex, and the protein SAR1. Component of the nuclear pore complex (NPC). NPC constitutes the exclusive means of nucleocytoplasmic transport. NPCs allow the passive diffusion of ions and small molecules and the active, nuclear transport receptor-mediated bidirectional transport of macromolecules such as proteins, RNAs, ribonucleoparticles (RNPs), and ribosomal subunits across the nuclear envelope. Due to its 8-fold rotational symmetry, all subunits are present with 8 copies or multiples thereof.

It is found in the cytoplasmic vesicle. The protein localises to the COPII-coated vesicle membrane. It localises to the endoplasmic reticulum membrane. The protein resides in the nucleus. Its subcellular location is the nuclear pore complex. Functionally, component of the coat protein complex II (COPII) which promotes the formation of transport vesicles from the endoplasmic reticulum (ER). The coat has two main functions, the physical deformation of the endoplasmic reticulum membrane into vesicles and the selection of cargo molecules. It also functions as a component of the nuclear pore complex (NPC). NPC components, collectively referred to as nucleoporins (NUPs), can play the role of both NPC structural components and of docking or interaction partners for transiently associated nuclear transport factors. SEC13 is required for efficient mRNA export from the nucleus to the cytoplasm and for correct nuclear pore biogenesis and distribution. This is Protein transport protein SEC13-2 (SEC132) from Candida glabrata (strain ATCC 2001 / BCRC 20586 / JCM 3761 / NBRC 0622 / NRRL Y-65 / CBS 138) (Yeast).